We begin with the raw amino-acid sequence, 299 residues long: GTPase Era (299 aa).

The Era-type G domain maps to 5–175; sequence RSGFVCFVGR…TDVLAGKLPP (171 aa). Residues 13–20 are G1; sequence GRPNTGKS. A GTP-binding site is contributed by 13 to 20; sequence GRPNTGKS. The G2 stretch occupies residues 39 to 43; the sequence is QTTRH. The G3 stretch occupies residues 60 to 63; that stretch reads DTPG. GTP-binding positions include 60 to 64 and 124 to 127; these read DTPGL and TKID. Residues 124–127 are G4; that stretch reads TKID. Positions 154-156 are G5; sequence VSA. Residues 206–285 enclose the KH type-2 domain; sequence VRDELPHSLA…YLDLRVKIAK (80 aa).

The protein belongs to the TRAFAC class TrmE-Era-EngA-EngB-Septin-like GTPase superfamily. Era GTPase family. As to quaternary structure, monomer.

The protein localises to the cell envelope. Its subcellular location is the secreted. It is found in the cell wall. Exhibits GTPase activity. Binds RNA but is probably not involved in ribosome assembly in mycobacteria. The sequence is that of GTPase Era from Mycobacterium sp. (strain KMS).